A 398-amino-acid chain; its full sequence is Acetate kinase (398 aa).

Residue asparagine 8 participates in Mg(2+) binding. Lysine 15 contacts ATP. Arginine 89 is a substrate binding site. The Proton donor/acceptor role is filled by aspartate 146. ATP is bound by residues 206–210 (HIGNG), 283–285 (DMR), and 331–335 (GMGEN). Glutamate 383 serves as a coordination point for Mg(2+).

It belongs to the acetokinase family. In terms of assembly, homodimer. Mg(2+) is required as a cofactor. Mn(2+) serves as cofactor.

The protein resides in the cytoplasm. The enzyme catalyses acetate + ATP = acetyl phosphate + ADP. The protein operates within metabolic intermediate biosynthesis; acetyl-CoA biosynthesis; acetyl-CoA from acetate: step 1/2. Catalyzes the formation of acetyl phosphate from acetate and ATP. Can also catalyze the reverse reaction. The sequence is that of Acetate kinase from Streptococcus pyogenes serotype M4 (strain MGAS10750).